Here is a 101-residue protein sequence, read N- to C-terminus: MMLEHVLVLSAYLFSVGLYGLITSRNMVRALMCLELILNAVNINFVTFSDFFDSRQLKGSIFSIFVIAIAAAEAAIGLAIVSSIYRNRKSTRINQSNLLNK.

Transmembrane regions (helical) follow at residues 2-22 (MLEH…YGLI), 32-52 (MCLE…SDFF), and 61-81 (IFSI…LAIV).

Belongs to the complex I subunit 4L family. NDH is composed of at least 16 different subunits, 5 of which are encoded in the nucleus.

Its subcellular location is the plastid. The protein localises to the chloroplast thylakoid membrane. It catalyses the reaction a plastoquinone + NADH + (n+1) H(+)(in) = a plastoquinol + NAD(+) + n H(+)(out). The enzyme catalyses a plastoquinone + NADPH + (n+1) H(+)(in) = a plastoquinol + NADP(+) + n H(+)(out). Functionally, NDH shuttles electrons from NAD(P)H:plastoquinone, via FMN and iron-sulfur (Fe-S) centers, to quinones in the photosynthetic chain and possibly in a chloroplast respiratory chain. The immediate electron acceptor for the enzyme in this species is believed to be plastoquinone. Couples the redox reaction to proton translocation, and thus conserves the redox energy in a proton gradient. This Daucus carota (Wild carrot) protein is NAD(P)H-quinone oxidoreductase subunit 4L, chloroplastic.